The primary structure comprises 284 residues: Protease HtpX (284 aa).

Transmembrane regions (helical) follow at residues 4–24 and 33–53; these read ILLF…ILSL and MGLL…SLLM. His-139 serves as a coordination point for Zn(2+). Glu-140 is an active-site residue. His-143 lines the Zn(2+) pocket. 2 consecutive transmembrane segments (helical) span residues 147–167 and 187–207; these read GDMV…IFAA and IYFL…SMIA. Glu-215 lines the Zn(2+) pocket.

It belongs to the peptidase M48B family. It depends on Zn(2+) as a cofactor.

It is found in the cell inner membrane. The chain is Protease HtpX from Mannheimia succiniciproducens (strain KCTC 0769BP / MBEL55E).